Consider the following 289-residue polypeptide: NAD kinase (289 aa).

The Proton acceptor role is filled by Asp82. Residues 82–83, Arg87, 150–151, Lys161, Arg178, Asp180, 191–196, Ala215, and Gln250 each bind NAD(+); these read DG, NE, and TAYAMS.

The protein belongs to the NAD kinase family. A divalent metal cation serves as cofactor.

Its subcellular location is the cytoplasm. It catalyses the reaction NAD(+) + ATP = ADP + NADP(+) + H(+). Functionally, involved in the regulation of the intracellular balance of NAD and NADP, and is a key enzyme in the biosynthesis of NADP. Catalyzes specifically the phosphorylation on 2'-hydroxyl of the adenosine moiety of NAD to yield NADP. This is NAD kinase from Methanosarcina mazei (strain ATCC BAA-159 / DSM 3647 / Goe1 / Go1 / JCM 11833 / OCM 88) (Methanosarcina frisia).